Consider the following 838-residue polypeptide: V-type proton ATPase 116 kDa subunit a 1 (838 aa).

The Cytoplasmic segment spans residues 1-388 (MGELFRSEEM…DAYGIGTYRE (388 aa)). Residues 389-407 (INPAPYTIITFPFLFAVMF) traverse the membrane as a helical segment. At 408-409 (GD) the chain is on the vacuolar side. The chain crosses the membrane as a helical span at residues 410 to 426 (FGHGILMTLIAIWMVLR). Residues 427-441 (ESRILSQKSDNEMFS) lie on the Cytoplasmic side of the membrane. The chain crosses the membrane as a helical span at residues 442–471 (TVFSGRYIILLMGLFSTYTGLIYNDCFSKS). At 472 to 535 (LNMFGSSWSV…ANNKLAFLNS (64 aa)) the chain is on the vacuolar side. The chain crosses the membrane as a helical span at residues 536 to 555 (FKMKMSVILGIIHMLFGVML). Over 556–573 (SLLNHIYFKKPLNIYLGF) the chain is Cytoplasmic. The helical transmembrane segment at 574–594 (IPEMIFMSSLFGYLVILIFYK) threads the bilayer. Residues 595–639 (WTAYDAHTSKEAPSPLIHFINMFLFSYGDTSNKMLYRGQKGIQCF) are Vacuolar-facing. A helical transmembrane segment spans residues 640–659 (LVVVALLCVPWMLVAKPLVL). Residues 660–725 (RHQYLRRKHL…DTVVYQAIHT (66 aa)) lie on the Cytoplasmic side of the membrane. The helical transmembrane segment at 726–750 (IEYCLGCISNTASYLRLWALSLAHA) threads the bilayer. The Vacuolar portion of the chain corresponds to 751-771 (QLSEVLWTMVIHTGLSVRSLA). A helical membrane pass occupies residues 772–810 (GGFGLVFIFAAFATLTVAILLVMEGLSAFLHALRLHWIE). The Cytoplasmic portion of the chain corresponds to 811-838 (FQNKFYTGTGFKFLPFSFDPIREGKFDD).

This sequence belongs to the V-ATPase 116 kDa subunit family. As to quaternary structure, V-ATPase is a heteromultimeric enzyme made up of two complexes: the ATP-hydrolytic V1 complex and the proton translocation V0 complex. The V1 complex consists of three catalytic AB heterodimers that form a heterohexamer, three peripheral stalks each consisting of EG heterodimers, one central rotor including subunits D and F, and the regulatory subunits C and H. The proton translocation complex V0 consists of the proton transport subunit a, a ring of proteolipid subunits c9c'', rotary subunit d, subunits e and f, and two accessory subunits. Detected in brain (at protein level). Highest expression in brain, intermediate levels in kidney, and relatively low levels in bone and liver.

It is found in the cytoplasmic vesicle. The protein localises to the clathrin-coated vesicle membrane. It localises to the secretory vesicle. The protein resides in the synaptic vesicle membrane. Its subcellular location is the melanosome. Subunit of the V0 complex of vacuolar(H+)-ATPase (V-ATPase), a multisubunit enzyme composed of a peripheral complex (V1) that hydrolyzes ATP and a membrane integral complex (V0) that translocates protons. V-ATPase is responsible for acidifying and maintaining the pH of intracellular compartments and in some cell types, is targeted to the plasma membrane, where it is responsible for acidifying the extracellular environment. Required for assembly and activity of the vacuolar ATPase. The polypeptide is V-type proton ATPase 116 kDa subunit a 1 (ATP6V0A1) (Gallus gallus (Chicken)).